The sequence spans 194 residues: Probable DNA-directed RNA polymerase subunit delta (194 aa).

Residues 14 to 83 (LSMIEVARAI…GENKWGLRSW (70 aa)) form the HTH HARE-type domain. A disordered region spans residues 117 to 194 (GDEDAIDYSD…SDDEEDEEGE (78 aa)).

It belongs to the RpoE family. As to quaternary structure, RNAP is composed of a core of 2 alpha, a beta and a beta' subunits. The core is associated with a delta subunit and one of several sigma factors.

Participates in both the initiation and recycling phases of transcription. In the presence of the delta subunit, RNAP displays an increased specificity of transcription, a decreased affinity for nucleic acids, and an increased efficiency of RNA synthesis because of enhanced recycling. This is Probable DNA-directed RNA polymerase subunit delta from Streptococcus mutans serotype c (strain ATCC 700610 / UA159).